A 545-amino-acid chain; its full sequence is Inosine-5'-monophosphate dehydrogenase (545 aa).

CBS domains follow at residues 138-194 (MITD…DYDT) and 201-258 (MTKE…PDAT). Residues D295 and 347–349 (GIG) contribute to the NAD(+) site. Residues G349 and G351 each contribute to the K(+) site. S352 is an IMP binding site. Residue C354 participates in K(+) binding. C354 functions as the Thioimidate intermediate in the catalytic mechanism. Residues 387–389 (DGG), 410–411 (GG), and 434–438 (YRGMG) each bind IMP. The active-site Proton acceptor is R455. Residue E470 coordinates IMP. K(+)-binding residues include E524, S525, and H526.

The protein belongs to the IMPDH/GMPR family. As to quaternary structure, homotetramer. K(+) is required as a cofactor.

It catalyses the reaction IMP + NAD(+) + H2O = XMP + NADH + H(+). It functions in the pathway purine metabolism; XMP biosynthesis via de novo pathway; XMP from IMP: step 1/1. Mycophenolic acid (MPA) is a non-competitive inhibitor that prevents formation of the closed enzyme conformation by binding to the same site as the amobile flap. In contrast, mizoribine monophosphate (MZP) is a competitive inhibitor that induces the closed conformation. MPA is a potent inhibitor of mammalian IMPDHs but a poor inhibitor of the bacterial enzymes. MZP is a more potent inhibitor of bacterial IMPDH. Catalyzes the conversion of inosine 5'-phosphate (IMP) to xanthosine 5'-phosphate (XMP), the first committed and rate-limiting step in the de novo synthesis of guanine nucleotides, and therefore plays an important role in the regulation of cell growth. The polypeptide is Inosine-5'-monophosphate dehydrogenase (Bifidobacterium longum (strain NCC 2705)).